We begin with the raw amino-acid sequence, 451 residues long: tRNA-2-methylthio-N(6)-dimethylallyladenosine synthase (451 aa).

The MTTase N-terminal domain occupies 1-116; sequence MTYFFETYGC…LPQIFDEIKA (116 aa). Residues Cys10, Cys46, Cys79, Cys162, Cys166, and Cys169 each contribute to the [4Fe-4S] cluster site. The region spanning 148 to 384 is the Radical SAM core domain; sequence SPKSFQSYVP…IDLQLKITAK (237 aa). Residues 387 to 451 form the TRAM domain; it reads KAKLGKKVDI…KGKTFRANLN (65 aa).

Belongs to the methylthiotransferase family. MiaB subfamily. As to quaternary structure, monomer. The cofactor is [4Fe-4S] cluster.

It is found in the cytoplasm. It catalyses the reaction N(6)-dimethylallyladenosine(37) in tRNA + (sulfur carrier)-SH + AH2 + 2 S-adenosyl-L-methionine = 2-methylsulfanyl-N(6)-dimethylallyladenosine(37) in tRNA + (sulfur carrier)-H + 5'-deoxyadenosine + L-methionine + A + S-adenosyl-L-homocysteine + 2 H(+). Catalyzes the methylthiolation of N6-(dimethylallyl)adenosine (i(6)A), leading to the formation of 2-methylthio-N6-(dimethylallyl)adenosine (ms(2)i(6)A) at position 37 in tRNAs that read codons beginning with uridine. The polypeptide is tRNA-2-methylthio-N(6)-dimethylallyladenosine synthase (Treponema denticola (strain ATCC 35405 / DSM 14222 / CIP 103919 / JCM 8153 / KCTC 15104)).